The primary structure comprises 228 residues: L-ribulose-5-phosphate 4-epimerase UlaF (228 aa).

Residues glycine 26–asparagine 27, serine 43–glycine 44, and serine 72–serine 73 each bind substrate. Zn(2+) is bound by residues aspartate 74, histidine 93, and histidine 95. The active-site Proton donor/acceptor is aspartate 118. Histidine 167 serves as a coordination point for Zn(2+). Tyrosine 225 acts as the Proton donor/acceptor in catalysis.

Belongs to the aldolase class II family. AraD/FucA subfamily. Requires Zn(2+) as cofactor.

It carries out the reaction L-ribulose 5-phosphate = D-xylulose 5-phosphate. The protein operates within cofactor degradation; L-ascorbate degradation; D-xylulose 5-phosphate from L-ascorbate: step 4/4. Its function is as follows. Catalyzes the isomerization of L-ribulose 5-phosphate to D-xylulose 5-phosphate. Is involved in the anaerobic L-ascorbate utilization. This is L-ribulose-5-phosphate 4-epimerase UlaF from Shigella sonnei (strain Ss046).